A 674-amino-acid chain; its full sequence is Cysteine-rich receptor-like protein kinase 6 (674 aa).

The signal sequence occupies residues 1 to 24 (MSSLISFNFLFLFSFLTSSFTASA). Topologically, residues 25-289 (QDPFYLNHYC…LPGKSGNSTV (265 aa)) are extracellular. Gnk2-homologous domains lie at 28–132 (FYLN…HKNI) and 139–245 (NEGE…LYPF). 7 N-linked (GlcNAc...) asparagine glycosylation sites follow: N36, N43, N61, N70, N104, N178, and N247. Over residues 254–266 (PPLPPPPPPPPPR) the composition is skewed to pro residues. Residues 254–284 (PPLPPPPPPPPPRESLVSTPPISSSSLPGKS) are disordered. Residues 268-284 (SLVSTPPISSSSLPGKS) show a composition bias toward low complexity. N286 is a glycosylation site (N-linked (GlcNAc...) asparagine). A helical transmembrane segment spans residues 290–310 (LVVAVVVLAVLLFIALVGYCF). Topologically, residues 311-674 (LAKKKKKTFD…DESITDLYPR (364 aa)) are cytoplasmic. In terms of domain architecture, Protein kinase spans 351-637 (FAESNKIGRG…TLPVPRQPGF (287 aa)). Residues 357-365 (IGRGGFGEV) and K379 each bind ATP. The residue at position 424 (Y424) is a Phosphotyrosine. D476 (proton acceptor) is an active-site residue. S480 is subject to Phosphoserine. Phosphothreonine is present on T516. Residue Y524 is modified to Phosphotyrosine. The interval 648–674 (LDSDQSTTTKSFPASIDDESITDLYPR) is disordered. Polar residues predominate over residues 650 to 659 (SDQSTTTKSF).

Belongs to the protein kinase superfamily. Ser/Thr protein kinase family. CRK subfamily.

It is found in the membrane. The catalysed reaction is L-seryl-[protein] + ATP = O-phospho-L-seryl-[protein] + ADP + H(+). The enzyme catalyses L-threonyl-[protein] + ATP = O-phospho-L-threonyl-[protein] + ADP + H(+). This chain is Cysteine-rich receptor-like protein kinase 6 (CRK6), found in Arabidopsis thaliana (Mouse-ear cress).